Reading from the N-terminus, the 701-residue chain is Elongation factor G (701 aa).

Residues 8 to 291 (GRYRNIGIVA…AVIDYLPAPT (284 aa)) form the tr-type G domain. Residues 17-24 (AHVDAGKT), 89-93 (DTPGH), and 143-146 (NKMD) contribute to the GTP site.

The protein belongs to the TRAFAC class translation factor GTPase superfamily. Classic translation factor GTPase family. EF-G/EF-2 subfamily.

Its subcellular location is the cytoplasm. Catalyzes the GTP-dependent ribosomal translocation step during translation elongation. During this step, the ribosome changes from the pre-translocational (PRE) to the post-translocational (POST) state as the newly formed A-site-bound peptidyl-tRNA and P-site-bound deacylated tRNA move to the P and E sites, respectively. Catalyzes the coordinated movement of the two tRNA molecules, the mRNA and conformational changes in the ribosome. In Pseudomonas syringae pv. syringae (strain B728a), this protein is Elongation factor G.